Here is a 667-residue protein sequence, read N- to C-terminus: DNA ligase (667 aa).

Residues 34-38 (DYEFD), 83-84 (SL), and E117 each bind NAD(+). K119 functions as the N6-AMP-lysine intermediate in the catalytic mechanism. Residues R140, E176, K289, and K313 each coordinate NAD(+). Positions 407, 410, 425, and 431 each coordinate Zn(2+). Positions 591–667 (QVNRNFEGMS…ISEDEFMGMM (77 aa)) constitute a BRCT domain.

This sequence belongs to the NAD-dependent DNA ligase family. LigA subfamily. It depends on Mg(2+) as a cofactor. Requires Mn(2+) as cofactor.

It catalyses the reaction NAD(+) + (deoxyribonucleotide)n-3'-hydroxyl + 5'-phospho-(deoxyribonucleotide)m = (deoxyribonucleotide)n+m + AMP + beta-nicotinamide D-nucleotide.. Functionally, DNA ligase that catalyzes the formation of phosphodiester linkages between 5'-phosphoryl and 3'-hydroxyl groups in double-stranded DNA using NAD as a coenzyme and as the energy source for the reaction. It is essential for DNA replication and repair of damaged DNA. The polypeptide is DNA ligase (Chlorobium chlorochromatii (strain CaD3)).